A 658-amino-acid chain; its full sequence is Probable Xaa-Pro aminopeptidase P (658 aa).

Residues D449, D460, E558, and E572 each coordinate Mn(2+).

It belongs to the peptidase M24B family. Requires Mn(2+) as cofactor.

It catalyses the reaction Release of any N-terminal amino acid, including proline, that is linked to proline, even from a dipeptide or tripeptide.. Catalyzes the removal of a penultimate prolyl residue from the N-termini of peptides. This Aspergillus clavatus (strain ATCC 1007 / CBS 513.65 / DSM 816 / NCTC 3887 / NRRL 1 / QM 1276 / 107) protein is Probable Xaa-Pro aminopeptidase P (ampp).